The primary structure comprises 424 residues: Serine--tRNA ligase (424 aa).

233 to 235 (TAE) provides a ligand contact to L-serine. An ATP-binding site is contributed by 264-266 (RRE). E287 is an L-serine binding site. Position 351–354 (351–354 (EISS)) interacts with ATP. Residue S386 participates in L-serine binding.

It belongs to the class-II aminoacyl-tRNA synthetase family. Type-1 seryl-tRNA synthetase subfamily. As to quaternary structure, homodimer. The tRNA molecule binds across the dimer.

It is found in the cytoplasm. It catalyses the reaction tRNA(Ser) + L-serine + ATP = L-seryl-tRNA(Ser) + AMP + diphosphate + H(+). The enzyme catalyses tRNA(Sec) + L-serine + ATP = L-seryl-tRNA(Sec) + AMP + diphosphate + H(+). Its pathway is aminoacyl-tRNA biosynthesis; selenocysteinyl-tRNA(Sec) biosynthesis; L-seryl-tRNA(Sec) from L-serine and tRNA(Sec): step 1/1. Functionally, catalyzes the attachment of serine to tRNA(Ser). Is also able to aminoacylate tRNA(Sec) with serine, to form the misacylated tRNA L-seryl-tRNA(Sec), which will be further converted into selenocysteinyl-tRNA(Sec). In Pseudothermotoga lettingae (strain ATCC BAA-301 / DSM 14385 / NBRC 107922 / TMO) (Thermotoga lettingae), this protein is Serine--tRNA ligase.